Consider the following 479-residue polypeptide: Signal recognition particle subunit SRP54 1 (479 aa).

The G-domain stretch occupies residues 1-295 (MVLAELGGRI…DVKPFVSRLL (295 aa)). GTP contacts are provided by residues 108-115 (GLQGAGKT), 190-194 (DTSGR), and 248-251 (TKMD). Residues 296–479 (GKGDWSGLVD…MMGMFGGGGK (184 aa)) form an M-domain region.

It belongs to the GTP-binding SRP family. SRP54 subfamily. As to quaternary structure, component of a signal recognition particle (SRP) complex that consists of a 7SL RNA molecule of 300 nucleotides and six protein subunits: SRP72, SRP68, SRP54, SRP19, SRP14 and SRP9.

Its subcellular location is the cytoplasm. It is found in the endoplasmic reticulum. It catalyses the reaction GTP + H2O = GDP + phosphate + H(+). In terms of biological role, component of the signal recognition particle (SRP) complex, a ribonucleoprotein complex that mediates the cotranslational targeting of secretory and membrane proteins to the endoplasmic reticulum (ER). As part of the SRP complex, associates with the SRP receptor (SR) component SRPRA to target secretory proteins to the endoplasmic reticulum membrane. Binds to the signal sequence of presecretory proteins when they emerge from the ribosomes. Displays basal GTPase activity, and stimulates reciprocal GTPase activation of the SR subunit SRPRA. Forms a guanosine 5'-triphosphate (GTP)-dependent complex with the SR subunit SRPRA. SR compaction and GTPase mediated rearrangement of SR drive SRP-mediated cotranslational protein translocation into the ER. Requires the presence of SRP9/SRP14 and/or SRP19 to stably interact with RNA. This is Signal recognition particle subunit SRP54 1 (SRP-54A) from Arabidopsis thaliana (Mouse-ear cress).